A 311-amino-acid chain; its full sequence is Pyrimidine-specific ribonucleoside hydrolase RihA (311 aa).

Residue His-240 is part of the active site.

Belongs to the IUNH family. RihA subfamily.

Functionally, hydrolyzes cytidine or uridine to ribose and cytosine or uracil, respectively. The protein is Pyrimidine-specific ribonucleoside hydrolase RihA of Klebsiella pneumoniae subsp. pneumoniae (strain ATCC 700721 / MGH 78578).